We begin with the raw amino-acid sequence, 127 residues long: Two-component response regulator ORR41 (127 aa).

The Response regulatory domain occupies 7-125 (RVLLVEDEEI…KLGVILAKFR (119 aa)). Position 60 is a 4-aspartylphosphate (aspartate 60).

It belongs to the ARR family. Type-C subfamily. Post-translationally, two-component system major event consists of a His-to-Asp phosphorelay between a sensor histidine kinase (HK) and a response regulator (RR). In plants, the His-to-Asp phosphorelay involves an additional intermediate named Histidine-containing phosphotransfer protein (HPt). This multistep phosphorelay consists of a His-Asp-His-Asp sequential transfer of a phosphate group between first a His and an Asp of the HK protein, followed by the transfer to a conserved His of the HPt protein and finally the transfer to an Asp in the receiver domain of the RR protein.

Functions as a response regulator involved in His-to-Asp phosphorelay signal transduction system. Phosphorylation of the Asp residue in the receiver domain activates the ability of the protein to promote the transcription of target genes. May directly activate some type-A response regulators in response to cytokinins. This chain is Two-component response regulator ORR41, found in Oryza sativa subsp. japonica (Rice).